The sequence spans 470 residues: Putative multidrug resistance protein MdtD (470 aa).

Over 1–11 the chain is Periplasmic; it reads MTEFPDNTRWQ. A helical membrane pass occupies residues 12-32; the sequence is LWIVAFGFFMQSLDTTIVNTA. The Cytoplasmic portion of the chain corresponds to 33–48; the sequence is LPSMAKSLGESPLHMH. A helical transmembrane segment spans residues 49–69; sequence MVVVSYVLTVAVMLPASGWLA. At 70 to 76 the chain is on the periplasmic side; sequence DKIGVRN. Residues 77-97 form a helical membrane-spanning segment; it reads IFFAAIVLFTLGSLFCALSGT. Residues 98 to 101 are Cytoplasmic-facing; sequence LNQL. The helical transmembrane segment at 102 to 124 threads the bilayer; that stretch reads VLARVLQGVGGAMMVPVGRLTVM. The Periplasmic portion of the chain corresponds to 125–137; the sequence is KIVPRAQYMAAMT. A helical membrane pass occupies residues 138 to 158; it reads FVALPGQIGPLLGPALGGVLV. Topologically, residues 159-164 are cytoplasmic; it reads EYASWH. A helical transmembrane segment spans residues 165–185; that stretch reads WIFLINIPVGIVGAMATFMLM. Topologically, residues 186–196 are periplasmic; that stretch reads PNYTIETRRFD. Residues 197-217 traverse the membrane as a helical segment; the sequence is LPGFLLLAIGMAVLTLALDGS. Topologically, residues 218–224 are cytoplasmic; sequence KSMGISP. A helical membrane pass occupies residues 225–245; that stretch reads WTLAGLAAGGAAAILLYLFHA. The Periplasmic segment spans residues 246–262; it reads KKNSGALFSLRLFRTPT. A helical membrane pass occupies residues 263–283; that stretch reads FSLGLLGSFAGRIGSGMLPFM. Over 284 to 285 the chain is Cytoplasmic; sequence TP. Residues 286 to 306 form a helical membrane-spanning segment; the sequence is VFLQIGLGFSPFHAGLMMIPM. Topologically, residues 307 to 341 are periplasmic; the sequence is VLGSMGMKRIVVQIVNRFGYRRVLVATTLGLALVS. A helical transmembrane segment spans residues 342–362; the sequence is LLFMSVALLGWYYLLPLVLLL. Topologically, residues 363–395 are cytoplasmic; it reads QGMVNSARFSSMNTLTLKDLPDTLASSGNSLLS. Residues 396 to 416 form a helical membrane-spanning segment; the sequence is MIMQLSMSIGVTIAGMLLGMF. At 417 to 430 the chain is on the periplasmic side; sequence GQQHIGIDSSATHH. The helical transmembrane segment at 431-451 threads the bilayer; that stretch reads VFMYTWLCMAVIIALPAIIFA. The Cytoplasmic portion of the chain corresponds to 452-470; the sequence is RVPNDTQQNMVISRRKRSL.

It belongs to the major facilitator superfamily. TCR/Tet family.

Its subcellular location is the cell inner membrane. This Salmonella typhi protein is Putative multidrug resistance protein MdtD.